The primary structure comprises 952 residues: uncharacterized protein (952 aa).

Positions 1–141 (MASLLARHTK…PWIADYLIRR (141 aa)) constitute a CheB-type methylesterase domain. A CheR-type methyltransferase domain is found at 168–440 (VGQFDGLEPA…SARHRIWQAL (273 aa)). Over residues 923–935 (HNQTEASPETSSG) the composition is skewed to polar residues. The interval 923–952 (HNQTEASPETSSGGLPGSDGTGADGGAPRA) is disordered. Gly residues predominate over residues 936-952 (GLPGSDGTGADGGAPRA).

This is an uncharacterized protein from Rhodobacter capsulatus (Rhodopseudomonas capsulata).